A 169-amino-acid chain; its full sequence is Cell division inhibitor SulA (169 aa).

A ftsZ binding region spans residues 106–112; the sequence is ALRTGNY. The segment at 162 to 169 is lon protease binding; that stretch reads KIHSNLYH.

Belongs to the SulA family. In terms of assembly, interacts with FtsZ. Is rapidly cleaved and degraded by the Lon protease once DNA damage is repaired.

Functionally, component of the SOS system and an inhibitor of cell division. Accumulation of SulA causes rapid cessation of cell division and the appearance of long, non-septate filaments. In the presence of GTP, binds a polymerization-competent form of FtsZ in a 1:1 ratio, thus inhibiting FtsZ polymerization and therefore preventing it from participating in the assembly of the Z ring. This mechanism prevents the premature segregation of damaged DNA to daughter cells during cell division. The polypeptide is Cell division inhibitor SulA (Shigella flexneri serotype 5b (strain 8401)).